A 464-amino-acid chain; its full sequence is UDP-N-acetylmuramoyl-tripeptide--D-alanyl-D-alanine ligase (464 aa).

An ATP-binding site is contributed by 125 to 131 (GSNGKTT).

Belongs to the MurCDEF family. MurF subfamily.

The protein resides in the cytoplasm. It carries out the reaction D-alanyl-D-alanine + UDP-N-acetyl-alpha-D-muramoyl-L-alanyl-gamma-D-glutamyl-meso-2,6-diaminopimelate + ATP = UDP-N-acetyl-alpha-D-muramoyl-L-alanyl-gamma-D-glutamyl-meso-2,6-diaminopimeloyl-D-alanyl-D-alanine + ADP + phosphate + H(+). Its pathway is cell wall biogenesis; peptidoglycan biosynthesis. Its function is as follows. Involved in cell wall formation. Catalyzes the final step in the synthesis of UDP-N-acetylmuramoyl-pentapeptide, the precursor of murein. This is UDP-N-acetylmuramoyl-tripeptide--D-alanyl-D-alanine ligase from Borreliella burgdorferi (strain ATCC 35210 / DSM 4680 / CIP 102532 / B31) (Borrelia burgdorferi).